Consider the following 456-residue polypeptide: CBL-interacting serine/threonine-protein kinase 2 (456 aa).

The 255-residue stretch at Y12 to F266 folds into the Protein kinase domain. Residues L18–V26 and K41 contribute to the ATP site. The active-site Proton acceptor is the D134. Residues D152 to E181 are activation loop. S156 bears the Phosphoserine mark. At T170 the chain carries Phosphothreonine. A disordered region spans residues M280–P309. The NAF domain occupies P309–G333. Residues K338–I367 form a PPI region.

It belongs to the protein kinase superfamily. CAMK Ser/Thr protein kinase family. SNF1 subfamily. In terms of assembly, interacts with CBL2, CBL3 and CBL5. It depends on Mn(2+) as a cofactor.

The enzyme catalyses L-seryl-[protein] + ATP = O-phospho-L-seryl-[protein] + ADP + H(+). It catalyses the reaction L-threonyl-[protein] + ATP = O-phospho-L-threonyl-[protein] + ADP + H(+). Its function is as follows. CIPK serine-threonine protein kinases interact with CBL proteins. Binding of a CBL protein to the regulatory NAF domain of CIPK protein lead to the activation of the kinase in a calcium-dependent manner. The polypeptide is CBL-interacting serine/threonine-protein kinase 2 (CIPK2) (Arabidopsis thaliana (Mouse-ear cress)).